We begin with the raw amino-acid sequence, 59 residues long: Protein translocase subunit SecE (59 aa).

A helical transmembrane segment spans residues 35–55 (IVAIGIAIIGVVGFIIVLIGE).

The protein belongs to the SecE/SEC61-gamma family. As to quaternary structure, component of the Sec protein translocase complex. Heterotrimer consisting of SecY (alpha), SecG (beta) and SecE (gamma) subunits. The heterotrimers can form oligomers, although 1 heterotrimer is thought to be able to translocate proteins. Interacts with the ribosome. May interact with SecDF, and other proteins may be involved.

The protein resides in the cell membrane. Its function is as follows. Essential subunit of the Sec protein translocation channel SecYEG. Clamps together the 2 halves of SecY. May contact the channel plug during translocation. The polypeptide is Protein translocase subunit SecE (Methanobrevibacter smithii (strain ATCC 35061 / DSM 861 / OCM 144 / PS)).